An 871-amino-acid chain; its full sequence is DNA mismatch repair protein MutS (871 aa).

616 to 623 serves as a coordination point for ATP; the sequence is GPNMAGKS. A disordered region spans residues 801–825; it reads ETEKTEESMEGTNLPKKKKEEKTSS.

It belongs to the DNA mismatch repair MutS family.

Its function is as follows. This protein is involved in the repair of mismatches in DNA. It is possible that it carries out the mismatch recognition step. This protein has a weak ATPase activity. In Clostridium kluyveri (strain NBRC 12016), this protein is DNA mismatch repair protein MutS.